A 1755-amino-acid polypeptide reads, in one-letter code: Transposon Ty1-DR1 Gag-Pol polyprotein (1755 aa).

3 stretches are compositionally biased toward polar residues: residues 1-10 (MESQQLSNYP), 48-60 (TKANSQQTTTPAS), and 127-152 (QSQFPQYPSSVGTPLSTPSPESGNTF). Disordered stretches follow at residues 1–93 (MESQ…MMTQ), 126–173 (PQSQ…RPPP), and 352–421 (GSRN…SKST). Positions 153–165 (TDSSSADSDMTST) are enriched in low complexity. The RNA-binding stretch occupies residues 299-401 (NNGIHINNKV…NSKSKTARAH (103 aa)). The segment covering 402–418 (NVSTSNNSPSTDNDSIS) has biased composition (low complexity). S416 is subject to Phosphoserine. D461 (for protease activity; shared with dimeric partner) is an active-site residue. Positions 583-640 (NVHTSESTRKYPYPFIHRMLAHANAQTIRYSLKNNTITYFNESDVDWSSAIDYQCPDC) are integrase-type zinc finger-like. An Integrase catalytic domain is found at 660–835 (NSYEPFQYLH…AGLDISTLLP (176 aa)). Residues D671 and D736 each contribute to the Mg(2+) site. Disordered regions lie at residues 956–1087 (SKAV…ETEK), 1092–1111 (RSPSIDASPPENNSSHNIVP), and 1130–1187 (DLPL…DNET). Low complexity predominate over residues 960–969 (SPTDSTPPST). A compositionally biased stretch (polar residues) spans 1005 to 1015 (STPQISNIEST). A compositionally biased stretch (basic and acidic residues) spans 1038-1053 (ESSHASKSKDFRHSDS). Polar residues-rich tracts occupy residues 1054-1082 (YSENETNHTNVPISSTGGTNNKTVPQISD) and 1101-1111 (PENNSSHNIVP). Positions 1178-1212 (KKRSLEDNETEIKVSRDTWNTKNMRSLEPPRSKKR) match the Bipartite nuclear localization signal motif. Positions 1338–1476 (NNYYITQLDI…DILGLEIKYQ (139 aa)) constitute a Reverse transcriptase Ty1/copia-type domain. Mg(2+)-binding residues include D1346, D1427, D1428, D1610, E1652, and D1685. Residues 1610–1752 (DASYGNQPYY…IKTFKLLTNK (143 aa)) form the RNase H Ty1/copia-type domain.

As to quaternary structure, the capsid protein forms a homotrimer, from which the VLPs are assembled. The protease is a homodimer, whose active site consists of two apposed aspartic acid residues. Post-translationally, initially, virus-like particles (VLPs) are composed of the structural unprocessed proteins Gag and Gag-Pol, and also contain the host initiator methionine tRNA (tRNA(i)-Met) which serves as a primer for minus-strand DNA synthesis, and a dimer of genomic Ty RNA. Processing of the polyproteins occurs within the particle and proceeds by an ordered pathway, called maturation. First, the protease (PR) is released by autocatalytic cleavage of the Gag-Pol polyprotein yielding capsid protein p45 and a Pol-p154 precursor protein. This cleavage is a prerequisite for subsequent processing of Pol-p154 at the remaining sites to release the mature structural and catalytic proteins. Maturation takes place prior to the RT reaction and is required to produce transposition-competent VLPs.

The protein localises to the cytoplasm. It is found in the nucleus. It catalyses the reaction DNA(n) + a 2'-deoxyribonucleoside 5'-triphosphate = DNA(n+1) + diphosphate. The catalysed reaction is Endonucleolytic cleavage to 5'-phosphomonoester.. Its function is as follows. Capsid protein (CA) is the structural component of the virus-like particle (VLP), forming the shell that encapsulates the retrotransposons dimeric RNA genome. The particles are assembled from trimer-clustered units and there are holes in the capsid shells that allow for the diffusion of macromolecules. CA also has nucleocapsid-like chaperone activity, promoting primer tRNA(i)-Met annealing to the multipartite primer-binding site (PBS), dimerization of Ty1 RNA and initiation of reverse transcription. In terms of biological role, the aspartyl protease (PR) mediates the proteolytic cleavages of the Gag and Gag-Pol polyproteins after assembly of the VLP. Functionally, reverse transcriptase/ribonuclease H (RT) is a multifunctional enzyme that catalyzes the conversion of the retro-elements RNA genome into dsDNA within the VLP. The enzyme displays a DNA polymerase activity that can copy either DNA or RNA templates, and a ribonuclease H (RNase H) activity that cleaves the RNA strand of RNA-DNA heteroduplexes during plus-strand synthesis and hydrolyzes RNA primers. The conversion leads to a linear dsDNA copy of the retrotransposon that includes long terminal repeats (LTRs) at both ends. Integrase (IN) targets the VLP to the nucleus, where a subparticle preintegration complex (PIC) containing at least integrase and the newly synthesized dsDNA copy of the retrotransposon must transit the nuclear membrane. Once in the nucleus, integrase performs the integration of the dsDNA into the host genome. The polypeptide is Transposon Ty1-DR1 Gag-Pol polyprotein (TY1B-DR1) (Saccharomyces cerevisiae (strain ATCC 204508 / S288c) (Baker's yeast)).